A 270-amino-acid chain; its full sequence is Glutamate racemase (270 aa).

Substrate contacts are provided by residues 15–16 (DS) and 47–48 (YG). The active-site Proton donor/acceptor is the cysteine 78. 79–80 (NT) serves as a coordination point for substrate. Cysteine 189 acts as the Proton donor/acceptor in catalysis. 190-191 (TH) lines the substrate pocket.

The protein belongs to the aspartate/glutamate racemases family.

It catalyses the reaction L-glutamate = D-glutamate. The protein operates within cell wall biogenesis; peptidoglycan biosynthesis. Provides the (R)-glutamate required for cell wall biosynthesis. This is Glutamate racemase from Syntrophus aciditrophicus (strain SB).